The chain runs to 358 residues: Phenylalanine--tRNA ligase alpha subunit (358 aa).

Glu-279 is a Mg(2+) binding site.

This sequence belongs to the class-II aminoacyl-tRNA synthetase family. Phe-tRNA synthetase alpha subunit type 1 subfamily. Tetramer of two alpha and two beta subunits. Requires Mg(2+) as cofactor.

Its subcellular location is the cytoplasm. It carries out the reaction tRNA(Phe) + L-phenylalanine + ATP = L-phenylalanyl-tRNA(Phe) + AMP + diphosphate + H(+). This Variovorax paradoxus (strain S110) protein is Phenylalanine--tRNA ligase alpha subunit.